We begin with the raw amino-acid sequence, 466 residues long: Glutamate--tRNA ligase (466 aa).

The 'HIGH' region signature appears at 10–20 (PSPTGYLHVGG). C99, C101, C126, and D128 together coordinate Zn(2+). The short motif at 237–241 (RLSKR) is the 'KMSKS' region element. K240 contributes to the ATP binding site.

This sequence belongs to the class-I aminoacyl-tRNA synthetase family. Glutamate--tRNA ligase type 1 subfamily. Monomer. The cofactor is Zn(2+).

It is found in the cytoplasm. The enzyme catalyses tRNA(Glu) + L-glutamate + ATP = L-glutamyl-tRNA(Glu) + AMP + diphosphate. Functionally, catalyzes the attachment of glutamate to tRNA(Glu) in a two-step reaction: glutamate is first activated by ATP to form Glu-AMP and then transferred to the acceptor end of tRNA(Glu). This is Glutamate--tRNA ligase from Geobacter sulfurreducens (strain ATCC 51573 / DSM 12127 / PCA).